The chain runs to 466 residues: Adenosylhomocysteinase (466 aa).

Substrate contacts are provided by threonine 57, aspartate 132, and glutamate 192. 193–195 (TTT) is a binding site for NAD(+). The substrate site is built by lysine 222 and aspartate 226. NAD(+) contacts are provided by residues asparagine 227, 256–261 (GYGDVG), glutamate 279, asparagine 314, 335–337 (IGH), and asparagine 380.

Belongs to the adenosylhomocysteinase family. The cofactor is NAD(+).

Its subcellular location is the cytoplasm. The enzyme catalyses S-adenosyl-L-homocysteine + H2O = L-homocysteine + adenosine. Its pathway is amino-acid biosynthesis; L-homocysteine biosynthesis; L-homocysteine from S-adenosyl-L-homocysteine: step 1/1. In terms of biological role, may play a key role in the regulation of the intracellular concentration of adenosylhomocysteine. This Brucella anthropi (strain ATCC 49188 / DSM 6882 / CCUG 24695 / JCM 21032 / LMG 3331 / NBRC 15819 / NCTC 12168 / Alc 37) (Ochrobactrum anthropi) protein is Adenosylhomocysteinase.